The sequence spans 318 residues: Ubiquitin-conjugating enzyme E2 J1 (318 aa).

The Cytoplasmic segment spans residues 1–282 (METRYNLKSP…QGHQPRDNHT (282 aa)). The 151-residue stretch at 10–160 (PAVKRLMKEA…GCGSAMKDVL (151 aa)) folds into the UBC core domain. Cysteine 91 acts as the Glycyl thioester intermediate in catalysis. Serine 184 is subject to Phosphoserine; by MAPKAPK2. Residues 229–248 (LQNSSAASFHQPTQPVAKNT) show a composition bias toward polar residues. A disordered region spans residues 229 to 283 (LQNSSAASFHQPTQPVAKNTSMSPRQRRAQQQSQRRLSTSPDVIQGHQPRDNHTD). A compositionally biased stretch (low complexity) spans 249–268 (SMSPRQRRAQQQSQRRLSTS). Phosphoserine occurs at positions 266 and 268. The helical; Anchor for type IV membrane protein transmembrane segment at 283-303 (DHGGSAVLIVILTLALAALIF) threads the bilayer. Over 304 to 318 (RRIYLANEYIFDFEL) the chain is Lumenal.

This sequence belongs to the ubiquitin-conjugating enzyme family. In terms of assembly, component of the HRD1 complex, which comprises at least SYNV1/HRD1, DERL1/2, FAM8A1, HERPUD1/HERP, OS9, SEL1L and UBE2J1. Interacts with E3 ligase RNF26. Interacts with E3 ligase RNF133. In terms of processing, phosphorylated at Ser-184 in a cytosolic stress-dependent manner by MAP kinase p38 MAPKAPK2. Phosphorylated UBE2J1 is rapidly ubiquitinated and subsequently degraded by the proteasome. As to expression, expressed in testes.

It localises to the endoplasmic reticulum membrane. It carries out the reaction S-ubiquitinyl-[E1 ubiquitin-activating enzyme]-L-cysteine + [E2 ubiquitin-conjugating enzyme]-L-cysteine = [E1 ubiquitin-activating enzyme]-L-cysteine + S-ubiquitinyl-[E2 ubiquitin-conjugating enzyme]-L-cysteine.. It participates in protein modification; protein ubiquitination. Its function is as follows. Catalyzes the covalent attachment of ubiquitin to other proteins. Functions in the selective degradation of misfolded membrane proteins from the endoplasmic reticulum (ERAD) and is essential for cells to recover from ER stress. Plays a role in MAPKAPK2-dependent translational control of TNF-alpha synthesis. Also acts as a platform for perinuclear positioning of the endosomal system by mediating ubiquitination of SQSTM1 through interaction with the E3 ubiquitin-protein ligase RNF26. Plays a role in male fecundity through the interaction with the E3 ubiquitin-protein ligase RNF133. Functionally, (Microbial infection) Promotes Dengue virus RNA replication by negatively regulating IFN-beta signaling and mediating 'Lys-48'-linked ubiquitination on IRF3. The sequence is that of Ubiquitin-conjugating enzyme E2 J1 from Homo sapiens (Human).